A 65-amino-acid polypeptide reads, in one-letter code: UPF0434 protein bsr0601 (65 aa).

This sequence belongs to the UPF0434 family.

This is UPF0434 protein bsr0601 from Bradyrhizobium diazoefficiens (strain JCM 10833 / BCRC 13528 / IAM 13628 / NBRC 14792 / USDA 110).